We begin with the raw amino-acid sequence, 365 residues long: MLKVIQSPAKYLQGPDASTLFGQYAKNLADSFFVIADDFVMKLAGEKVLNGLHSHDISCHAERFNGECSHIEINRLIAILKQHGCRGVVGIGGGKTLDTAKAIGYYQKLPVVVIPTIASTDAPTSALSVIYTEAGEFEEYLIYPKNPDMVVMDTAIIAKAPVRLLVAGMGDALSTWFEAKACYDARATSMAGGQSTVAALSLARLCYDTLLAEGEKARFAAQAGVVTDALERIVEANTYLSGIGFESSGLAGAHAIHNGFTILEECHHLYHGEKVAFGTLAQLVLQNSPMEEIETVLNFCQKVGLPVTLAEMGVKDDIDGKIMAVAKATCAEGETIHNMPFSVTPESVHAAILTADLLGQQWLAR.

Asp-37, Gly-94, Lys-95, Thr-116, and Ser-119 together coordinate NAD(+). Asp-121 is a glycerol binding site. NAD(+) contacts are provided by Ser-125, Leu-127, and Tyr-131. Asp-171, His-254, and His-271 together coordinate Mn(2+). His-254 contacts glycerol.

This sequence belongs to the iron-containing alcohol dehydrogenase family. Homohexamer. Requires Mn(2+) as cofactor.

The catalysed reaction is glycerol + NAD(+) = dihydroxyacetone + NADH + H(+). The enzyme catalyses hydroxyacetone + NADH + H(+) = (S)-propane-1,2-diol + NAD(+). It participates in polyol metabolism; glycerol fermentation; glycerone phosphate from glycerol (oxidative route): step 1/2. With respect to regulation, inhibited by zinc. Catalyzes the NAD-dependent oxidation of glycerol to dihydroxyacetone (glycerone). Allows microorganisms to utilize glycerol as a source of carbon under anaerobic conditions. Exhibits a rather broad substrate specificity since it can also oxidize 1,2-propanediol and 2,3-butanediol and reduce dihydroxyacetone. Cannot use NADP(+) as an electron acceptor for the oxidation of glycerol. The chain is Glycerol dehydrogenase from Citrobacter freundii.